The chain runs to 345 residues: Ferrochelatase (345 aa).

Residues His-215 and Glu-296 each coordinate Fe cation.

The protein belongs to the ferrochelatase family.

Its subcellular location is the cytoplasm. The enzyme catalyses heme b + 2 H(+) = protoporphyrin IX + Fe(2+). The protein operates within porphyrin-containing compound metabolism; protoheme biosynthesis; protoheme from protoporphyrin-IX: step 1/1. In terms of biological role, catalyzes the ferrous insertion into protoporphyrin IX. This Rhodopseudomonas palustris (strain BisA53) protein is Ferrochelatase.